Reading from the N-terminus, the 415-residue chain is MDFISELKKRNIIKQISNEEKLALALKNQKGVYVGFDPSGESLHLGNLIPIIVLRYLKKVGFKTYAILGGATGLIGDPSGKTSERKVQDYEKITANANKIKVQLERYTQAKIINNIDFYQNMNLLNFLRDTGKLINIGYLLDKEFIRSRIENGISYAEFSYNIIQGHDFLHLYEQYDVQVQCGGSDQWGNITTGIDMIKRKYGEEKTPYLCGLTFNLLLNPNGNKFGKSEQGALYLDENLTHPYLIWQYIYNQDDQFIIDLIHRYVLDQSLEQLQELIEAHLANKKTRIAQKFLADYLVKFIHSQEHLDTVHKMNKALFDNQLDQLSDQEKLVVFASFDKVELDRNQSFMVIDFLLQAKVADSKRILRELIAQGSIQIDDLKITDPQAQLNVRKDQQLTVIKKGKKNYFIVVWKG.

Position 33 (Tyr33) interacts with L-tyrosine. The short motif at 38-47 is the 'HIGH' region element; the sequence is PSGESLHLGN. L-tyrosine is bound by residues Tyr161 and Gln165. The short motif at 225–229 is the 'KMSKS' region element; the sequence is KFGKS. Residue Lys228 participates in ATP binding. Residues 350–414 form the S4 RNA-binding domain; that stretch reads MVIDFLLQAK…KKNYFIVVWK (65 aa).

This sequence belongs to the class-I aminoacyl-tRNA synthetase family. TyrS type 1 subfamily. Homodimer.

It localises to the cytoplasm. It carries out the reaction tRNA(Tyr) + L-tyrosine + ATP = L-tyrosyl-tRNA(Tyr) + AMP + diphosphate + H(+). Catalyzes the attachment of tyrosine to tRNA(Tyr) in a two-step reaction: tyrosine is first activated by ATP to form Tyr-AMP and then transferred to the acceptor end of tRNA(Tyr). This chain is Tyrosine--tRNA ligase, found in Mycoplasmoides gallisepticum (strain R(low / passage 15 / clone 2)) (Mycoplasma gallisepticum).